The primary structure comprises 426 residues: C4-dicarboxylate transport protein (426 aa).

8 helical membrane passes run Val8–Pro28, Leu44–Met64, Leu78–Leu98, Gly148–Gly168, Ile184–Met204, Leu222–Ala242, Gly297–Ala317, and Ala355–Ile375.

This sequence belongs to the dicarboxylate/amino acid:cation symporter (DAACS) (TC 2.A.23) family.

It is found in the cell inner membrane. Functionally, responsible for the transport of dicarboxylates such as succinate, fumarate, and malate from the periplasm across the membrane. This is C4-dicarboxylate transport protein from Paraburkholderia phymatum (strain DSM 17167 / CIP 108236 / LMG 21445 / STM815) (Burkholderia phymatum).